Reading from the N-terminus, the 284-residue chain is Pantothenate synthetase (284 aa).

ATP is bound at residue 30-37 (MGALHDGH). His37 (proton donor) is an active-site residue. Gln61 contacts (R)-pantoate. Gln61 provides a ligand contact to beta-alanine. 147–150 (GEKD) is an ATP binding site. Residue Gln153 participates in (R)-pantoate binding. ATP contacts are provided by residues Val176 and 184–187 (KSSR).

This sequence belongs to the pantothenate synthetase family. As to quaternary structure, homodimer.

Its subcellular location is the cytoplasm. The catalysed reaction is (R)-pantoate + beta-alanine + ATP = (R)-pantothenate + AMP + diphosphate + H(+). The protein operates within cofactor biosynthesis; (R)-pantothenate biosynthesis; (R)-pantothenate from (R)-pantoate and beta-alanine: step 1/1. Functionally, catalyzes the condensation of pantoate with beta-alanine in an ATP-dependent reaction via a pantoyl-adenylate intermediate. The sequence is that of Pantothenate synthetase from Chloroherpeton thalassium (strain ATCC 35110 / GB-78).